The following is a 902-amino-acid chain: Methionine--tRNA ligase, cytoplasmic (902 aa).

The GST C-terminal domain maps to 74 to 212; it reads GWEQDDLTNQ…QKQPQPQPPP (139 aa). The 'HIGH' region motif lies at 275–285; that stretch reads PYVNNVPHLGN. A 'KMSKS' region motif is present at residues 595–599; that stretch reads KFSKS. Lys598 is an ATP binding site. Phosphoserine is present on Ser827. The residue at position 837 (Thr837) is a Phosphothreonine. Residues 843–899 form the WHEP-TRS domain; it reads HIQTLTDEVTKQGNVVRELKAQKADKNQVAAEVAKLLDLKKQLALAEGKPIETPKGK.

Belongs to the class-I aminoacyl-tRNA synthetase family. As to quaternary structure, monomer. Part of a multisubunit complex that groups tRNA ligases for Arg (RARS1), Asp (DARS1), Gln (QARS1), Ile (IARS1), Leu (LARS1), Lys (KARS1), Met (MARS1) the bifunctional ligase for Glu and Pro (EPRS1) and the auxiliary subunits AIMP1/p43, AIMP2/p38 and EEF1E1/p18. Forms a linear complex that contains MARS1, EEF1E1, EPRS1 and AIMP2 that is at the core of the multisubunit complex.

Its subcellular location is the cytoplasm. The protein localises to the cytosol. It localises to the nucleus. It is found in the nucleolus. The catalysed reaction is tRNA(Met) + L-methionine + ATP = L-methionyl-tRNA(Met) + AMP + diphosphate. In terms of biological role, catalyzes the specific attachment of an amino acid to its cognate tRNA in a 2 step reaction: the amino acid (AA) is first activated by ATP to form AA-AMP and then transferred to the acceptor end of the tRNA. Plays a role in the synthesis of ribosomal RNA in the nucleolus. In Mus musculus (Mouse), this protein is Methionine--tRNA ligase, cytoplasmic (Mars1).